The following is an 819-amino-acid chain: Lon protease (819 aa).

Residues 1-14 (MNSTNNTDSQNLDP) show a composition bias toward polar residues. The segment at 1–40 (MNSTNNTDSQNLDPNASEVEKLLDESAEAEEKVDDHTPPS) is disordered. Positions 18–38 (EVEKLLDESAEAEEKVDDHTP) are enriched in basic and acidic residues. A Lon N-terminal domain is found at 42-239 (LFILPLNKRP…KALVLLKKEL (198 aa)). 392–399 (GPPGVGKT) contacts ATP. The Lon proteolytic domain maps to 634–818 (KTPVGVATGL…DDVFKIAFPG (185 aa)). Residues Ser724 and Lys767 contribute to the active site.

It belongs to the peptidase S16 family. As to quaternary structure, homohexamer. Organized in a ring with a central cavity.

The protein resides in the cytoplasm. The enzyme catalyses Hydrolysis of proteins in presence of ATP.. ATP-dependent serine protease that mediates the selective degradation of mutant and abnormal proteins as well as certain short-lived regulatory proteins. Required for cellular homeostasis and for survival from DNA damage and developmental changes induced by stress. Degrades polypeptides processively to yield small peptide fragments that are 5 to 10 amino acids long. Binds to DNA in a double-stranded, site-specific manner. The protein is Lon protease of Chlamydia trachomatis serovar D (strain ATCC VR-885 / DSM 19411 / UW-3/Cx).